We begin with the raw amino-acid sequence, 1184 residues long: Non-receptor tyrosine-protein kinase TYK2 (1184 aa).

In terms of domain architecture, FERM spans 33-430 (LMVLLHWPGP…GYFRLTADSS (398 aa)). The tract at residues 294 to 368 (CYIQNSGQTA…KAGEHLTESP (75 aa)) is disordered. Tyr-295 bears the Phosphotyrosine mark. Residues 449–529 (GIHGPLMDPF…GRSFASLGDL (81 aa)) enclose the SH2; atypical domain. Ser-525 is subject to Phosphoserine. Positions 589 to 866 (ITQLSHLGQG…RTILRDLTRL (278 aa)) constitute a Protein kinase 1 domain. Residue Tyr-604 is modified to Phosphotyrosine. Position 881 is a phosphoserine (Ser-881). One can recognise a Protein kinase 2 domain in the interval 894–1166 (LKKIRDLGEG…PTFQNLVPIL (273 aa)). ATP-binding positions include 900 to 908 (LGEGHFGKV) and Lys-927. Asp-1020 (proton acceptor) is an active-site residue. The residue at position 1051 (Tyr-1051) is a Phosphotyrosine; by autocatalysis. Phosphotyrosine is present on Tyr-1052.

It belongs to the protein kinase superfamily. Tyr protein kinase family. JAK subfamily. As to quaternary structure, interacts (via FERM domain) with JAKMIP1. Interacts with PIK3R1; this interaction is important for cell migration. Interacts with MPL/TPOR. Phosphorylation by JAK1 at Tyr-1051 and Tyr-1052 induces kinase activation.

It catalyses the reaction L-tyrosyl-[protein] + ATP = O-phospho-L-tyrosyl-[protein] + ADP + H(+). The protein kinase 1 domain (also termed pseudokinase domain) mediates autoinhibition of the TYK2 kinase domain. In terms of biological role, tyrosine kinase of the non-receptor type involved in numerous cytokines and interferons signaling, which regulates cell growth, development, cell migration, innate and adaptive immunity. Plays both structural and catalytic roles in numerous interleukins and interferons (IFN-alpha/beta) signaling. Associates with heterodimeric cytokine receptor complexes and activates STAT family members including STAT1, STAT3, STAT4 or STAT6. The heterodimeric cytokine receptor complexes are composed of (1) a TYK2-associated receptor chain (IFNAR1, IL12RB1, IL10RB or IL13RA1), and (2) a second receptor chain associated either with JAK1 or JAK2. In response to cytokine-binding to receptors, phosphorylates and activates receptors (IFNAR1, IL12RB1, IL10RB or IL13RA1), creating docking sites for STAT members. In turn, recruited STATs are phosphorylated by TYK2 (or JAK1/JAK2 on the second receptor chain), form homo- and heterodimers, translocate to the nucleus, and regulate cytokine/growth factor responsive genes. Negatively regulates STAT3 activity by promototing phosphorylation at a specific tyrosine that differs from the site used for signaling. In Mus musculus (Mouse), this protein is Non-receptor tyrosine-protein kinase TYK2.